The primary structure comprises 283 residues: Small ribosomal subunit protein uS3 (283 aa).

One can recognise a KH type-2 domain in the interval 39–107 (VRAYLKTKLK…PVHVNIEEIR (69 aa)). Residues 209-283 (PSGEPPVDLT…GAVPAEKAGE (75 aa)) form a disordered region. Basic and acidic residues predominate over residues 217-235 (LTKEDDTKRRGPRRDDGKP). The segment covering 244–260 (PEGQPGAAAAPGAAPAA) has biased composition (low complexity).

It belongs to the universal ribosomal protein uS3 family. As to quaternary structure, part of the 30S ribosomal subunit. Forms a tight complex with proteins S10 and S14.

Binds the lower part of the 30S subunit head. Binds mRNA in the 70S ribosome, positioning it for translation. The protein is Small ribosomal subunit protein uS3 of Herminiimonas arsenicoxydans.